A 680-amino-acid chain; its full sequence is Structure-specific endonuclease subunit SLX4 (680 aa).

3 disordered regions span residues 15–92 (EVAK…EPVV), 141–183 (ESSS…STQQ), and 450–490 (LGSG…ATRL). Residues 22 to 33 (DSDEPIIDEDDL) show a composition bias toward acidic residues. Basic and acidic residues predominate over residues 60-86 (NNSKDTFKETPLELVDKEEAIEDKAPN). A compositionally biased stretch (basic residues) spans 156 to 174 (LKSKKITKPKLTKTSKRTK). Residues 473-490 (TVISRSPQSTRTPQATRL) show a composition bias toward polar residues.

The protein belongs to the SLX4 family. As to quaternary structure, forms a heterodimer with SLX1. Post-translationally, phosphorylated in response to DNA damage.

It localises to the nucleus. Functionally, regulatory subunit of the SLX1-SLX4 structure-specific endonuclease that resolves DNA secondary structures generated during DNA repair and recombination. Has endonuclease activity towards branched DNA substrates, introducing single-strand cuts in duplex DNA close to junctions with ss-DNA. This chain is Structure-specific endonuclease subunit SLX4, found in Vanderwaltozyma polyspora (strain ATCC 22028 / DSM 70294 / BCRC 21397 / CBS 2163 / NBRC 10782 / NRRL Y-8283 / UCD 57-17) (Kluyveromyces polysporus).